The chain runs to 320 residues: Integrin-binding sialoprotein (320 aa).

Positions 1 to 16 are cleaved as a signal peptide; that stretch reads MKTALILLCILGMASA. Phosphoserine occurs at positions 31, 68, 76, 77, and 96. 3 disordered regions span residues 60 to 117, 136 to 225, and 238 to 264; these read PVQG…VTAS, LPKK…RELT, and FQQTTPPPEAYGTTSPPARKSSTVEYG. The span at 67-106 shows a compositional bias: acidic residues; sequence SSEENGDGDSSEEEGEEEETSNEEENNEDSEGNEDQEAEA. N-linked (GlcNAc...) asparagine glycosylation occurs at Asn108. A compositionally biased stretch (basic and acidic residues) spans 139 to 152; the sequence is KAGDAEGKAPKMKE. Ser153 is modified (phosphoserine). The span at 153–176 shows a compositional bias: acidic residues; it reads SDEEEEEEEEEENENEEAEVDENE. Polar residues-rich tracts occupy residues 177 to 188 and 249 to 261; these read QVVNGTSTNSTE and GTTSPPARKSSTV. 2 N-linked (GlcNAc...) asparagine glycosylation sites follow: Asn180 and Asn185. The Integrin-binding motif motif lies at 289–291; that stretch reads RGD. 2 positions are modified to sulfotyrosine: Tyr316 and Tyr317.

Monomer. Interacts with integrins; the interaction promotes cell adhesion.

It is found in the secreted. Functionally, binds tightly to hydroxyapatite. Appears to form an integral part of the mineralized matrix. Probably important to cell-matrix interaction. Promotes adhesion and migration of various cells via the alpha-V/beta-3 integrin receptor (ITGAV:ITGB3). The chain is Integrin-binding sialoprotein (Ibsp) from Rattus norvegicus (Rat).